Consider the following 110-residue polypeptide: UPF0060 membrane protein Mmwyl1_1139 (110 aa).

4 helical membrane passes run 7 to 27 (ISLF…PYLW), 33 to 53 (TIWL…LLTL), 63 to 83 (AAYG…VDGI), and 87 to 107 (TWDM…MFAP).

The protein belongs to the UPF0060 family.

Its subcellular location is the cell inner membrane. The protein is UPF0060 membrane protein Mmwyl1_1139 of Marinomonas sp. (strain MWYL1).